Consider the following 412-residue polypeptide: Serine hydroxymethyltransferase (412 aa).

(6S)-5,6,7,8-tetrahydrofolate contacts are provided by residues Leu119 and 123-125; that span reads GHL. The residue at position 228 (Lys228) is an N6-(pyridoxal phosphate)lysine.

It belongs to the SHMT family. As to quaternary structure, homodimer. The cofactor is pyridoxal 5'-phosphate.

It localises to the cytoplasm. The catalysed reaction is (6R)-5,10-methylene-5,6,7,8-tetrahydrofolate + glycine + H2O = (6S)-5,6,7,8-tetrahydrofolate + L-serine. It participates in one-carbon metabolism; tetrahydrofolate interconversion. It functions in the pathway amino-acid biosynthesis; glycine biosynthesis; glycine from L-serine: step 1/1. Functionally, catalyzes the reversible interconversion of serine and glycine with tetrahydrofolate (THF) serving as the one-carbon carrier. This reaction serves as the major source of one-carbon groups required for the biosynthesis of purines, thymidylate, methionine, and other important biomolecules. Also exhibits THF-independent aldolase activity toward beta-hydroxyamino acids, producing glycine and aldehydes, via a retro-aldol mechanism. The sequence is that of Serine hydroxymethyltransferase from Thermodesulfovibrio yellowstonii (strain ATCC 51303 / DSM 11347 / YP87).